The sequence spans 328 residues: Reticulocalbin-3 (328 aa).

The N-terminal stretch at methionine 1–glycine 20 is a signal peptide. A disordered region spans residues glutamine 19 to histidine 49. EF-hand domains are found at residues glutamate 75–arginine 112, histidine 113–proline 148, lysine 163–proline 198, methionine 200–glycine 235, tryptophan 241–aspartate 276, and glutamine 277–serine 312. The Ca(2+) site is built by aspartate 92, aspartate 94, tryptophan 96, glutamate 101, aspartate 126, aspartate 128, aspartate 130, arginine 132, and glutamate 137. N-linked (GlcNAc...) asparagine glycosylation is present at asparagine 140. Aspartate 176, aspartate 178, aspartate 180, methionine 182, glutamate 187, aspartate 213, asparagine 215, aspartate 217, tyrosine 219, glutamate 224, aspartate 254, asparagine 256, aspartate 258, histidine 260, glutamate 265, aspartate 290, aspartate 292, aspartate 294, arginine 296, and glutamate 301 together coordinate Ca(2+). The Prevents secretion from ER motif lies at histidine 325–leucine 328.

The protein belongs to the CREC family. Interacts with PCSK6 (immature form including the propeptide); probably involved in the maturation and the secretion of PCSK6. In terms of processing, degraded by PCSK6 and other endoproteases including FURIN and PCSK5. N-glycosylated. As to expression, widely expressed.

The protein localises to the endoplasmic reticulum lumen. In terms of biological role, probable molecular chaperone assisting protein biosynthesis and transport in the endoplasmic reticulum. Required for the proper biosynthesis and transport of pulmonary surfactant-associated protein A/SP-A, pulmonary surfactant-associated protein D/SP-D and the lipid transporter ABCA3. By regulating both the proper expression and the degradation through the endoplasmic reticulum-associated protein degradation pathway of these proteins plays a crucial role in pulmonary surfactant homeostasis. Has an anti-fibrotic activity by negatively regulating the secretion of type I and type III collagens. This calcium-binding protein also transiently associates with immature PCSK6 and regulates its secretion. This is Reticulocalbin-3 from Homo sapiens (Human).